Reading from the N-terminus, the 1050-residue chain is Probable beta-glucosidase E (1050 aa).

Residues 1–87 (MPPPDSNPGS…RSSSTNGGHN (87 aa)) form a disordered region. At 1-174 (MPPPDSNPGS…VKYARIWRRT (174 aa)) the chain is on the cytoplasmic side. Basic and acidic residues predominate over residues 11-20 (FRDHLKHDNK). Residues 47–56 (SPRSASASSS) show a composition bias toward low complexity. Positions 78 to 87 (RSSSTNGGHN) are enriched in polar residues. Residues 175–195 (LVVVIVALALLVWGFLRFTAA) traverse the membrane as a helical; Signal-anchor for type II membrane protein segment. Residues 196–1050 (QRQGPKVWPM…SRDLPLQAKY (855 aa)) lie on the Extracellular side of the membrane. 4 N-linked (GlcNAc...) asparagine glycosylation sites follow: N236, N244, N300, and N430. The active site involves D458. Residues N501, N540, N605, N884, N920, N929, and N993 are each glycosylated (N-linked (GlcNAc...) asparagine).

The protein belongs to the glycosyl hydrolase 3 family.

Its subcellular location is the cell membrane. It carries out the reaction Hydrolysis of terminal, non-reducing beta-D-glucosyl residues with release of beta-D-glucose.. It participates in glycan metabolism; cellulose degradation. In terms of biological role, beta-glucosidases are one of a number of cellulolytic enzymes involved in the degradation of cellulosic biomass. Catalyzes the last step releasing glucose from the inhibitory cellobiose. The protein is Probable beta-glucosidase E (bglE) of Aspergillus clavatus (strain ATCC 1007 / CBS 513.65 / DSM 816 / NCTC 3887 / NRRL 1 / QM 1276 / 107).